The chain runs to 402 residues: Type II NADH:quinone oxidoreductase (402 aa).

FAD contacts are provided by residues 12 to 16 (GAGYA), 39 to 40 (NK), and Val-83. The active site involves Glu-172. FAD is bound by residues Asp-302, 319–320 (AQ), and Lys-379.

This sequence belongs to the NADH dehydrogenase family. Requires FAD as cofactor.

It localises to the cell membrane. It carries out the reaction a quinone + NADH + H(+) = a quinol + NAD(+). In terms of biological role, alternative, nonproton pumping NADH:quinone oxidoreductase that delivers electrons to the respiratory chain by oxidation of NADH and reduction of quinones, and contributes to the regeneration of NAD(+). The protein is Type II NADH:quinone oxidoreductase of Staphylococcus haemolyticus (strain JCSC1435).